The following is a 112-amino-acid chain: UPF0102 protein JJD26997_0163 (112 aa).

It belongs to the UPF0102 family.

The polypeptide is UPF0102 protein JJD26997_0163 (Campylobacter jejuni subsp. doylei (strain ATCC BAA-1458 / RM4099 / 269.97)).